A 469-amino-acid chain; its full sequence is Glutamate--tRNA ligase 2 (469 aa).

The 'HIGH' region signature appears at 8-18; that stretch reads PSPTGFLHVGG. The 'KMSKS' region signature appears at 250 to 254; that stretch reads KLSKR. Residue Lys-253 coordinates ATP.

The protein belongs to the class-I aminoacyl-tRNA synthetase family. Glutamate--tRNA ligase type 1 subfamily. As to quaternary structure, monomer.

The protein resides in the cytoplasm. It catalyses the reaction tRNA(Glu) + L-glutamate + ATP = L-glutamyl-tRNA(Glu) + AMP + diphosphate. Functionally, catalyzes the attachment of glutamate to tRNA(Glu) in a two-step reaction: glutamate is first activated by ATP to form Glu-AMP and then transferred to the acceptor end of tRNA(Glu). In Thermotoga petrophila (strain ATCC BAA-488 / DSM 13995 / JCM 10881 / RKU-1), this protein is Glutamate--tRNA ligase 2.